A 281-amino-acid polypeptide reads, in one-letter code: Nhr-229 coiled coil domain containing nccd-1 (281 aa).

The sequence is that of Nhr-229 coiled coil domain containing nccd-1 from Caenorhabditis elegans.